A 360-amino-acid chain; its full sequence is 1-aminocyclopropane-1-carboxylate oxidase homolog 6 (360 aa).

One can recognise a Fe2OG dioxygenase domain in the interval 208–309 (KGLLLLCHYY…ISVASFFSTS (102 aa)). Fe cation contacts are provided by histidine 232, aspartate 234, and histidine 288. Residue arginine 299 participates in 2-oxoglutarate binding.

It belongs to the iron/ascorbate-dependent oxidoreductase family. Requires Fe(2+) as cofactor. Constitutively expressed in leaves and blades.

In Arabidopsis thaliana (Mouse-ear cress), this protein is 1-aminocyclopropane-1-carboxylate oxidase homolog 6.